We begin with the raw amino-acid sequence, 87 residues long: Large ribosomal subunit protein bL31B (87 aa).

Belongs to the bacterial ribosomal protein bL31 family. Type B subfamily. In terms of assembly, part of the 50S ribosomal subunit.

The sequence is that of Large ribosomal subunit protein bL31B from Pseudomonas paraeruginosa (strain DSM 24068 / PA7) (Pseudomonas aeruginosa (strain PA7)).